Reading from the N-terminus, the 188-residue chain is ATP synthase subunit b 2 (188 aa).

The tract at residues 1 to 23 is disordered; the sequence is MAEGHGDANGATAHTAADGGHKA. The span at 8-18 shows a compositional bias: low complexity; that stretch reads ANGATAHTAAD. Residues 37–57 form a helical membrane-spanning segment; the sequence is LVSLLIAFVALYLIVSKIALP.

It belongs to the ATPase B chain family. In terms of assembly, F-type ATPases have 2 components, F(1) - the catalytic core - and F(0) - the membrane proton channel. F(1) has five subunits: alpha(3), beta(3), gamma(1), delta(1), epsilon(1). F(0) has three main subunits: a(1), b(2) and c(10-14). The alpha and beta chains form an alternating ring which encloses part of the gamma chain. F(1) is attached to F(0) by a central stalk formed by the gamma and epsilon chains, while a peripheral stalk is formed by the delta and b chains.

The protein localises to the cell inner membrane. F(1)F(0) ATP synthase produces ATP from ADP in the presence of a proton or sodium gradient. F-type ATPases consist of two structural domains, F(1) containing the extramembraneous catalytic core and F(0) containing the membrane proton channel, linked together by a central stalk and a peripheral stalk. During catalysis, ATP synthesis in the catalytic domain of F(1) is coupled via a rotary mechanism of the central stalk subunits to proton translocation. In terms of biological role, component of the F(0) channel, it forms part of the peripheral stalk, linking F(1) to F(0). The b'-subunit is a diverged and duplicated form of b found in plants and photosynthetic bacteria. The sequence is that of ATP synthase subunit b 2 (atpF2) from Rhodopseudomonas palustris (strain BisB18).